The primary structure comprises 225 residues: MNATTAPLPYSAARLHELAHVLIANIRELAHAGWTPATSSNFSHRLDEQHAAITVSGRDKGRLVEEDIMVVDFDGLAVGRPLRPSAETLLHTQLYRRFPEICCVLHTHSPVQTIASRLYAGSDVIRLEGYELLKAFEGNTTHETAVEVPVFANTQDMQVLAAQVDALLDKQSMWGYLIEGHGLYAWGRNMAEARRHLEAFEFLLQCELELLKLRGTRQVVPVPHS.

2 residues coordinate Zn(2+): H106 and H108.

The protein belongs to the aldolase class II family. MtnB subfamily. Requires Zn(2+) as cofactor.

It catalyses the reaction 5-(methylsulfanyl)-D-ribulose 1-phosphate = 5-methylsulfanyl-2,3-dioxopentyl phosphate + H2O. The protein operates within amino-acid biosynthesis; L-methionine biosynthesis via salvage pathway; L-methionine from S-methyl-5-thio-alpha-D-ribose 1-phosphate: step 2/6. Its function is as follows. Catalyzes the dehydration of methylthioribulose-1-phosphate (MTRu-1-P) into 2,3-diketo-5-methylthiopentyl-1-phosphate (DK-MTP-1-P). This chain is Methylthioribulose-1-phosphate dehydratase, found in Xanthomonas oryzae pv. oryzae (strain PXO99A).